Reading from the N-terminus, the 519-residue chain is Molybdate transporter 1 (519 aa).

The next 7 membrane-spanning stretches (helical) occupy residues 98 to 118, 164 to 184, 370 to 390, 412 to 432, 436 to 456, 464 to 484, and 485 to 505; these read LLHA…SQAI, LGTE…ATTL, AVAL…AMPC, ILLG…LVVL, FPQP…ASVV, GYTF…TGTG, and FLVG…VAAA.

The protein belongs to the SLC26A/SulP transporter (TC 2.A.53) family.

It is found in the membrane. 60% inhibition by 20 uM tungstate or by lack of glucose in the medium, but no inhibition by sulfate. In terms of biological role, high affinity molybdate transporter. Acts through an energy-dependent process. This Chlamydomonas reinhardtii (Chlamydomonas smithii) protein is Molybdate transporter 1 (MOT1).